We begin with the raw amino-acid sequence, 204 residues long: Serotype 3 fimbrial subunit (204 aa).

The signal sequence occupies residues methionine 1–alanine 25. Cysteine 41 and cysteine 84 are joined by a disulfide.

This sequence belongs to the fimbrial protein family.

Its subcellular location is the fimbrium. Functionally, bordetella pertussis is the causative agent of whooping cough. An essential step in the disease process is the attachment of the bacteria to the ciliated epithelium of the respiratory tract, enabling the organism to resist normal host-clearance mechanisms. It is unclear which bacterial cell surface component are responsible for adherence but the fimbriae of B.pertussis are prime candidates for being involved in this process. This chain is Serotype 3 fimbrial subunit (fim3), found in Bordetella pertussis (strain Tohama I / ATCC BAA-589 / NCTC 13251).